The following is a 415-amino-acid chain: Diaminopimelate decarboxylase (415 aa).

The residue at position 60 (Lys-60) is an N6-(pyridoxal phosphate)lysine. Residues Gly-239 and 273 to 276 contribute to the pyridoxal 5'-phosphate site; that span reads EPGR. The substrate site is built by Arg-276, Arg-312, and Tyr-316. The active-site Proton donor is the Cys-342. Glu-343 and Tyr-370 together coordinate substrate. Tyr-370 is a binding site for pyridoxal 5'-phosphate.

The protein belongs to the Orn/Lys/Arg decarboxylase class-II family. LysA subfamily. Homodimer. Pyridoxal 5'-phosphate is required as a cofactor.

It catalyses the reaction meso-2,6-diaminopimelate + H(+) = L-lysine + CO2. The protein operates within amino-acid biosynthesis; L-lysine biosynthesis via DAP pathway; L-lysine from DL-2,6-diaminopimelate: step 1/1. Functionally, specifically catalyzes the decarboxylation of meso-diaminopimelate (meso-DAP) to L-lysine. In Pseudomonas aeruginosa (strain ATCC 15692 / DSM 22644 / CIP 104116 / JCM 14847 / LMG 12228 / 1C / PRS 101 / PAO1), this protein is Diaminopimelate decarboxylase.